Consider the following 128-residue polypeptide: Iron-sulfur cluster insertion protein ErpA (128 aa).

Positions 56, 120, and 122 each coordinate iron-sulfur cluster.

This sequence belongs to the HesB/IscA family. Homodimer. Requires iron-sulfur cluster as cofactor.

Required for insertion of 4Fe-4S clusters for at least IspG. In Xanthomonas euvesicatoria pv. vesicatoria (strain 85-10) (Xanthomonas campestris pv. vesicatoria), this protein is Iron-sulfur cluster insertion protein ErpA.